A 385-amino-acid polypeptide reads, in one-letter code: S-adenosylmethionine synthase (385 aa).

His-16 serves as a coordination point for ATP. Asp-18 serves as a coordination point for Mg(2+). Glu-44 is a K(+) binding site. Positions 57 and 100 each coordinate L-methionine. The interval 100–110 is flexible loop; it reads QSPDINQGVDK. Residues 165–167, 231–232, Asp-240, 246–247, Ala-263, and Lys-267 each bind ATP; these read DAK, RF, and RK. Asp-240 is an L-methionine binding site. Residue Lys-271 participates in L-methionine binding.

This sequence belongs to the AdoMet synthase family. In terms of assembly, homotetramer; dimer of dimers. It depends on Mg(2+) as a cofactor. The cofactor is K(+).

It is found in the cytoplasm. It carries out the reaction L-methionine + ATP + H2O = S-adenosyl-L-methionine + phosphate + diphosphate. The protein operates within amino-acid biosynthesis; S-adenosyl-L-methionine biosynthesis; S-adenosyl-L-methionine from L-methionine: step 1/1. Its function is as follows. Catalyzes the formation of S-adenosylmethionine (AdoMet) from methionine and ATP. The overall synthetic reaction is composed of two sequential steps, AdoMet formation and the subsequent tripolyphosphate hydrolysis which occurs prior to release of AdoMet from the enzyme. The polypeptide is S-adenosylmethionine synthase (Vibrio cholerae serotype O1 (strain ATCC 39315 / El Tor Inaba N16961)).